A 154-amino-acid chain; its full sequence is Transcriptional repressor NrdR (154 aa).

The segment at 3–34 (CPFCGANDTKVIDSRLVAEGEQVRRRRECLAC) is a zinc-finger region. One can recognise an ATP-cone domain in the interval 49 to 139 (PRLIKQDGSR…VYRRFQDLNE (91 aa)).

This sequence belongs to the NrdR family. Zn(2+) serves as cofactor.

In terms of biological role, negatively regulates transcription of bacterial ribonucleotide reductase nrd genes and operons by binding to NrdR-boxes. The protein is Transcriptional repressor NrdR of Pseudomonas syringae pv. syringae (strain B728a).